The chain runs to 143 residues: Large ribosomal subunit protein uL11 (143 aa).

It belongs to the universal ribosomal protein uL11 family. Part of the ribosomal stalk of the 50S ribosomal subunit. Interacts with L10 and the large rRNA to form the base of the stalk. L10 forms an elongated spine to which L12 dimers bind in a sequential fashion forming a multimeric L10(L12)X complex. One or more lysine residues are methylated.

Functionally, forms part of the ribosomal stalk which helps the ribosome interact with GTP-bound translation factors. The chain is Large ribosomal subunit protein uL11 from Ralstonia pickettii (strain 12J).